Reading from the N-terminus, the 599-residue chain is UV-damage endonuclease (599 aa).

2 disordered regions span residues 89 to 224 and 561 to 599; these read TELA…EKES and IMGPEYDQTRDGYYPPGAEKRLTARKRRSRKEEVEEDEK. Residues 97 to 115 are compositionally biased toward basic residues; the sequence is PHKKSTSTSTRKRARSSKK. The span at 116–127 shows a compositional bias: basic and acidic residues; that stretch reads KATDSVSDKIDE. Residues 137-146 show a composition bias toward basic residues; that stretch reads HLRRSSRSKK.

It belongs to the uve1/UvsE family.

In terms of biological role, endonuclease for the repair of UV-irradiated DNA. Involved in the excision of cyclobutane pyrimidine dimers (CPD) and 6-4 pyrimidine pyrimidones (6-4PP) which forms the UV damage repair (UVDR) pathway. Also functions in oxidative damage repair in vivo. Provides back-up AP endonuclease activity to apn2 together with apn1. The polypeptide is UV-damage endonuclease (uve1) (Schizosaccharomyces pombe (strain 972 / ATCC 24843) (Fission yeast)).